Here is a 223-residue protein sequence, read N- to C-terminus: Thiamine-phosphate synthase (223 aa).

Residues 37-41 and aspartate 72 contribute to the 4-amino-2-methyl-5-(diphosphooxymethyl)pyrimidine site; that span reads QFREK. Mg(2+) is bound by residues aspartate 73 and aspartate 92. Residue serine 110 coordinates 4-amino-2-methyl-5-(diphosphooxymethyl)pyrimidine. 136-138 contributes to the 2-[(2R,5Z)-2-carboxy-4-methylthiazol-5(2H)-ylidene]ethyl phosphate binding site; the sequence is TQS. Residue lysine 139 coordinates 4-amino-2-methyl-5-(diphosphooxymethyl)pyrimidine. 2-[(2R,5Z)-2-carboxy-4-methylthiazol-5(2H)-ylidene]ethyl phosphate contacts are provided by residues glycine 168 and 188-189; that span reads IS.

The protein belongs to the thiamine-phosphate synthase family. It depends on Mg(2+) as a cofactor.

The catalysed reaction is 2-[(2R,5Z)-2-carboxy-4-methylthiazol-5(2H)-ylidene]ethyl phosphate + 4-amino-2-methyl-5-(diphosphooxymethyl)pyrimidine + 2 H(+) = thiamine phosphate + CO2 + diphosphate. It carries out the reaction 2-(2-carboxy-4-methylthiazol-5-yl)ethyl phosphate + 4-amino-2-methyl-5-(diphosphooxymethyl)pyrimidine + 2 H(+) = thiamine phosphate + CO2 + diphosphate. It catalyses the reaction 4-methyl-5-(2-phosphooxyethyl)-thiazole + 4-amino-2-methyl-5-(diphosphooxymethyl)pyrimidine + H(+) = thiamine phosphate + diphosphate. It participates in cofactor biosynthesis; thiamine diphosphate biosynthesis; thiamine phosphate from 4-amino-2-methyl-5-diphosphomethylpyrimidine and 4-methyl-5-(2-phosphoethyl)-thiazole: step 1/1. Condenses 4-methyl-5-(beta-hydroxyethyl)thiazole monophosphate (THZ-P) and 2-methyl-4-amino-5-hydroxymethyl pyrimidine pyrophosphate (HMP-PP) to form thiamine monophosphate (TMP). The chain is Thiamine-phosphate synthase from Streptococcus agalactiae serotype III (strain NEM316).